We begin with the raw amino-acid sequence, 396 residues long: Elongation factor Tu (396 aa).

A tr-type G domain is found at 10-206 (KPHVNIGTIG…AVDESVPDPV (197 aa)). Positions 19–26 (GHVDHGKT) are G1. 19–26 (GHVDHGKT) provides a ligand contact to GTP. Threonine 26 contributes to the Mg(2+) binding site. Positions 62–66 (GITIN) are G2. Residues 83-86 (DAPG) are G3. Residues 83-87 (DAPGH) and 138-141 (NKSD) contribute to the GTP site. Residues 138–141 (NKSD) are G4. The G5 stretch occupies residues 176–178 (SGL).

This sequence belongs to the TRAFAC class translation factor GTPase superfamily. Classic translation factor GTPase family. EF-Tu/EF-1A subfamily. As to quaternary structure, monomer.

The protein resides in the cytoplasm. It catalyses the reaction GTP + H2O = GDP + phosphate + H(+). GTP hydrolase that promotes the GTP-dependent binding of aminoacyl-tRNA to the A-site of ribosomes during protein biosynthesis. In Paenarthrobacter aurescens (strain TC1), this protein is Elongation factor Tu.